A 500-amino-acid polypeptide reads, in one-letter code: Abscisic acid 8'-hydroxylase 3 (500 aa).

A helical transmembrane segment spans residues 3 to 23; the sequence is ASFVIVIVISFFISLAFMCYV. C426 is a heme binding site.

The protein belongs to the cytochrome P450 family. Requires heme as cofactor.

The protein localises to the membrane. It carries out the reaction 2-cis-(+)-abscisate + reduced [NADPH--hemoprotein reductase] + O2 = (+)-8'-hydroxyabscisate + oxidized [NADPH--hemoprotein reductase] + H2O + H(+). Its pathway is plant hormone degradation; abscisic acid degradation. Involved in the oxidative degradation of abscisic acid. The protein is Abscisic acid 8'-hydroxylase 3 (CYP707A7) of Oryza sativa subsp. indica (Rice).